The sequence spans 115 residues: Peptidyl-tRNA hydrolase (115 aa).

This sequence belongs to the PTH2 family.

It is found in the cytoplasm. It catalyses the reaction an N-acyl-L-alpha-aminoacyl-tRNA + H2O = an N-acyl-L-amino acid + a tRNA + H(+). In terms of biological role, the natural substrate for this enzyme may be peptidyl-tRNAs which drop off the ribosome during protein synthesis. This chain is Peptidyl-tRNA hydrolase (pth), found in Nanoarchaeum equitans (strain Kin4-M).